Consider the following 668-residue polypeptide: Break repair meiotic recombinase recruitment factor 1 (668 aa).

Disordered regions lie at residues methionine 1–proline 142, leucine 155–serine 333, leucine 349–asparagine 465, valine 482–aspartate 521, and leucine 642–leucine 668. A compositionally biased stretch (basic and acidic residues) spans threonine 114–glycine 125. Polar residues predominate over residues glutamine 166–valine 180. The segment covering serine 208–alanine 251 has biased composition (basic and acidic residues). Residues threonine 279–serine 296 show a composition bias toward low complexity. Residues alanine 305–serine 316 show a composition bias toward polar residues. Residue serine 370 is modified to Phosphoserine. A compositionally biased stretch (low complexity) spans threonine 391–glutamate 400.

As to quaternary structure, interacts with HSF2BP (via N-terminus) and BRCA2; the interaction with HSF2BP is direct and allows the formation of a ternary complex. The complex BRME1:HSF2BP:BRCA2 interacts with SPATA22, MEIOB and RAD51.

The protein resides in the chromosome. In terms of biological role, meiotic recombination factor component of recombination bridges involved in meiotic double-strand break repair. Modulates the localization of recombinases DMC1:RAD51 to meiotic double-strand break (DSB) sites through the interaction with and stabilization of the BRCA2:HSF2BP complex during meiotic recombination. Indispensable for the DSB repair, homologous synapsis, and crossover formation that are needed for progression past metaphase I, is essential for spermatogenesis and male fertility. The chain is Break repair meiotic recombinase recruitment factor 1 from Homo sapiens (Human).